Reading from the N-terminus, the 658-residue chain is Transcription factor cep-1 (658 aa).

The DNA-binding element occupies glutamate 238 to arginine 428. Cysteine 319, histidine 322, cysteine 375, and cysteine 379 together coordinate Zn(2+). A disordered region spans residues glutamine 450–serine 477. The span at threonine 466–serine 476 shows a compositional bias: low complexity. The segment at glutamine 535–isoleucine 564 is required for tertiary structure stability of the protein.

The protein belongs to the p53 family. In terms of assembly, homodimer. Interacts (via C-terminus domain) with prmt-5; not methylated by prmt-5. Interacts with cbp-1 (via HAT domain); cep-1 transcriptional activity may be inhibited by interaction with methylated cbp-1. Component of a complex that contains prmt-5 and cbp-1. Interacts with ape-1; the interaction inhibits pro-apoptotic activity of cep-1. Zn(2+) is required as a cofactor. Phosphorylated in response to IR-induced DNA damage which is thought to be mediated by akt-1.

Its subcellular location is the nucleus. In terms of biological role, transcriptional activator that binds the same DNA consensus sequence as p53. Has a role in normal development to ensure proper meiotic chromosome segregation. Promotes apoptosis under conditions of cellular and genotoxic stress in response to DNA damage, hypoxia, or starvation. However, not required for DNA repair in response to UV-C or to regulate cell-cycle progression. Regulates germline apoptosis in response to DNA damage. Required for induction of ced-13 in response to DNA damage. Its pro-apoptotic activity is inhibited when bound to ape-1 in vitro. Regulates germline proliferation by activating phg-1. Regulates DNA damage-induced apoptosis by inducing transcription of the programmed cell death activator egl-1. Negatively regulates lifespan. This chain is Transcription factor cep-1, found in Caenorhabditis briggsae.